A 312-amino-acid chain; its full sequence is Very long chain fatty acid elongase 4 (312 aa).

The N-linked (GlcNAc...) asparagine glycan is linked to Asn20. Helical transmembrane passes span 42-62 (LMQS…FVWL), 78-98 (VLII…RELF), 127-147 (ALWW…FFIL), 165-185 (MFTL…FFGA), 188-208 (NSFI…GPWI), 217-237 (YLTM…ALSL), and 246-266 (WMHW…LNFY). Over residues 273-292 (PKQSKTGKTATNGISSNGVN) the composition is skewed to polar residues. The interval 273 to 312 (PKQSKTGKTATNGISSNGVNKSEKALENGKPQKNGKPKGE) is disordered. Asn292 carries an N-linked (GlcNAc...) asparagine glycan. A Di-lysine motif motif is present at residues 308-312 (KPKGE).

This sequence belongs to the ELO family. ELOVL4 subfamily. As to quaternary structure, oligomer. N-glycosylated. In terms of tissue distribution, expressed in the retina, exclusively in photoreceptor cells and in the brain, skin, testis and lens.

The protein localises to the endoplasmic reticulum membrane. The enzyme catalyses a very-long-chain acyl-CoA + malonyl-CoA + H(+) = a very-long-chain 3-oxoacyl-CoA + CO2 + CoA. It catalyses the reaction hexacosanoyl-CoA + malonyl-CoA + H(+) = 3-oxooctacosanyol-CoA + CO2 + CoA. The catalysed reaction is octacosanoyl-CoA + malonyl-CoA + H(+) = 3-oxo-triacontanoyl-CoA + CO2 + CoA. It carries out the reaction triacontanoyl-CoA + malonyl-CoA + H(+) = 3-oxo-dotriacontanoyl-CoA + CO2 + CoA. The enzyme catalyses (19Z,22Z,25Z,28Z,31Z)-tetratriacontapentaenoyl-CoA + malonyl-CoA + H(+) = 3-oxo-(21Z,24Z,27Z,30Z,33Z)-hexatriacontapentaenoyl-CoA + CO2 + CoA. It catalyses the reaction (4Z,7Z,10Z,13Z,16Z,19Z)-docosahexaenoyl-CoA + malonyl-CoA + H(+) = 3-oxo-(6Z,9Z,12Z,15Z,18Z,21Z)-tetracosahexaenoyl-CoA + CO2 + CoA. The catalysed reaction is (7Z,10Z,13Z,16Z)-docosatetraenoyl-CoA + malonyl-CoA + H(+) = (9Z,12Z,15Z,18Z)-3-oxotetracosatetraenoyl-CoA + CO2 + CoA. It carries out the reaction (11Z,14Z,17Z,20Z,23Z)-hexacosapentaenoyl-CoA + malonyl-CoA + H(+) = 3-oxo-(13Z,16Z,19Z,22Z,25Z)-octacosapentaenoyl-CoA + CO2 + CoA. The enzyme catalyses (13Z,16Z,19Z,22Z,25Z)-octacosapentaenoyl-CoA + malonyl-CoA + H(+) = 3-oxo-(15Z,18Z,21Z,24Z,27Z)-triacontapentaenoyl-CoA + CO2 + CoA. It catalyses the reaction (15Z,18Z,21Z,24Z,27Z)-triacontapentaenoyl-CoA + malonyl-CoA + H(+) = 3-oxo-(17Z,20Z,23Z,26Z,29Z)-dotriacontapentaenoyl-CoA + CO2 + CoA. The catalysed reaction is (17Z,20Z,23Z,26Z,29Z)-dotriacontapentaenoyl-CoA + malonyl-CoA + H(+) = 3-oxo-(19Z,22Z,25Z,28Z,31Z)-tetratriacontapentaenoyl-CoA + CO2 + CoA. It carries out the reaction (21Z,24Z,27Z,30Z,33Z)-hexatriacontapentaenoyl-CoA + malonyl-CoA + H(+) = 3-oxo-(23Z,26Z,29Z,32Z,35Z)-octatriacontapentaenoyl-CoA + CO2 + CoA. The enzyme catalyses (11Z,14Z,17Z,20Z)-hexacosatetraenoyl-CoA + malonyl-CoA + H(+) = (13Z,16Z,19Z,22Z)-3-oxooctacosatetraenoyl-CoA + CO2 + CoA. It catalyses the reaction (13Z,16Z,19Z,22Z)-octacosatetraenoyl-CoA + malonyl-CoA + H(+) = 3-oxo-(15Z,18Z,21Z,24Z)-triacontatetraenoyl-CoA + CO2 + CoA. The catalysed reaction is (15Z,18Z,21Z,24Z)-triacontatetraenoyl-CoA + malonyl-CoA + H(+) = 3-oxo-(17Z,20Z,23Z,26Z)-dotriacontatetraenoyl-CoA + CO2 + CoA. It carries out the reaction (17Z,20Z,23Z,26Z)-dotriacontatetraenoyl-CoA + malonyl-CoA + H(+) = 3-oxo-(19Z,22Z,25Z,28Z)-tetratriacontatetraenoyl-CoA + CO2 + CoA. The enzyme catalyses (19Z,22Z,25Z,28Z)-tetratriacontatetraenoyl-CoA + malonyl-CoA + H(+) = 3-oxo-(21Z,24Z,27Z,30Z)-hexatriacontatetraenoyl-CoA + CO2 + CoA. It catalyses the reaction (21Z,24Z,27Z,30Z)-hexatriacontatetraenoyl-CoA + malonyl-CoA + H(+) = 3-oxo-(23Z,26Z,29Z,32Z)-octatriacontatetraenoyl-CoA + CO2 + CoA. The catalysed reaction is (6Z,9Z,12Z,15Z,18Z,21Z)-tetracosahexaenoyl-CoA + malonyl-CoA + H(+) = 3-oxo-(8Z,11Z,14Z,17Z,20Z,23Z)-hexacosahexaenoyl-CoA + CO2 + CoA. It carries out the reaction (8Z,11Z,14Z,17Z,20Z,23Z)-hexacosahexaenoyl-CoA + malonyl-CoA + H(+) = 3-oxo-(10Z,13Z,16Z,19Z,22Z,25Z)-octacosahexaenoyl-CoA + CO2 + CoA. The enzyme catalyses (10Z,13Z,16Z,19Z,22Z,25Z)-octacosahexaenoyl-CoA + malonyl-CoA + H(+) = 3-oxo-(12Z,15Z,18Z,21Z,24Z,27Z)-triacontahexaenoyl-CoA + CO2 + CoA. It catalyses the reaction (12Z,15Z,18Z,21Z,24Z,27Z)-triacontahexaenoyl-CoA + malonyl-CoA + H(+) = 3-oxo-(14Z,17Z,20Z,23Z,26Z,29Z)-dotriacontahexaenoyl-CoA + CO2 + CoA. The catalysed reaction is (14Z,17Z,20Z,23Z,26Z,29Z)-dotriacontahexaenoyl-CoA + malonyl-CoA + H(+) = 3-oxo-(16Z,19Z,22Z,25Z,28Z,31Z)-tetratriacontahexaenoyl-CoA + CO2 + CoA. It carries out the reaction (16Z,19Z,22Z,25Z,28Z,31Z)-tetratriacontahexaenoyl-CoA + malonyl-CoA + H(+) = 3-oxo-(18Z,21Z,24Z,27Z,30Z,33Z)-hexatriacontahexaenoyl-CoA + CO2 + CoA. The enzyme catalyses (9Z,12Z,15Z,18Z,21Z)-tetracosapentaenoyl-CoA + malonyl-CoA + H(+) = 3-oxo-(11Z,14Z,17Z,20Z,23Z)-hexacosapentaenoyl-CoA + CO2 + CoA. It functions in the pathway lipid metabolism; fatty acid biosynthesis. Its function is as follows. Catalyzes the first and rate-limiting reaction of the four reactions that constitute the long-chain fatty acids elongation cycle. This endoplasmic reticulum-bound enzymatic process allows the addition of 2 carbons to the chain of long- and very long-chain fatty acids (VLCFAs) per cycle. Condensing enzyme that catalyzes the synthesis of very long chain saturated (VLC-SFA) and polyunsaturated (PUFA) fatty acids that are involved in multiple biological processes as precursors of membrane lipids and lipid mediators. May play a critical role in early brain and skin development. This is Very long chain fatty acid elongase 4 from Mus musculus (Mouse).